A 251-amino-acid chain; its full sequence is Hydroxyacylglutathione hydrolase (251 aa).

His53, His55, Asp57, His58, His110, Asp127, and His165 together coordinate Zn(2+).

This sequence belongs to the metallo-beta-lactamase superfamily. Glyoxalase II family. As to quaternary structure, monomer. Zn(2+) serves as cofactor.

It carries out the reaction an S-(2-hydroxyacyl)glutathione + H2O = a 2-hydroxy carboxylate + glutathione + H(+). It functions in the pathway secondary metabolite metabolism; methylglyoxal degradation; (R)-lactate from methylglyoxal: step 2/2. Thiolesterase that catalyzes the hydrolysis of S-D-lactoyl-glutathione to form glutathione and D-lactic acid. The polypeptide is Hydroxyacylglutathione hydrolase (Escherichia coli O9:H4 (strain HS)).